The sequence spans 1388 residues: DNA-directed RNA polymerase subunit beta (1388 aa).

This sequence belongs to the RNA polymerase beta chain family. The RNAP catalytic core consists of 2 alpha, 1 beta, 1 beta' and 1 omega subunit. When a sigma factor is associated with the core the holoenzyme is formed, which can initiate transcription.

It catalyses the reaction RNA(n) + a ribonucleoside 5'-triphosphate = RNA(n+1) + diphosphate. DNA-dependent RNA polymerase catalyzes the transcription of DNA into RNA using the four ribonucleoside triphosphates as substrates. The polypeptide is DNA-directed RNA polymerase subunit beta (Xylella fastidiosa (strain Temecula1 / ATCC 700964)).